Here is a 284-residue protein sequence, read N- to C-terminus: Pseudopaline exporter CntI (284 aa).

10 helical membrane-spanning segments follow: residues 2 to 22 (VLDLLKSGVLLAVLASFTFSV), 34 to 54 (LPAAEIVFFRSAIGTLLIYLL), 74 to 94 (GVMGALYLVCYFYAIAHIPLA), 96 to 116 (ASILAHMSPFFVILFSALFLG), 122 to 142 (AVYWLLLVVVLGALMIVKPFS), 147 to 167 (SVYAVVGLLSAVFAAGASVAI), 179 to 199 (IVFYFLAVATLVAIPLMWSDF), 209 to 229 (GLLLAIGVVSLLGQVFLTRAF), 236 to 256 (IVAVTRYIGIVFNAGWGWLFW), and 259 to 279 (VPDALTIAGGVLIVVACIALS). 2 EamA domains span residues 8 to 138 (SGVL…LMIV) and 151 to 279 (VVGL…IALS).

Belongs to the EamA transporter family.

Its subcellular location is the cell inner membrane. In terms of biological role, transports the metallophore pseudopaline, which is involved in the acquisition of nickel and zinc, and thus enables bacterial growth inside the host, where metal access is limited. Is probably involved in the export of pseudopaline. In Pseudomonas aeruginosa (strain UCBPP-PA14), this protein is Pseudopaline exporter CntI.